The primary structure comprises 719 residues: Polyribonucleotide nucleotidyltransferase (719 aa).

The Mg(2+) site is built by Asp491 and Asp497. The 60-residue stretch at 558-617 (PRMLTIKINPEKIRDVIGKGGATIRALTEETGTQIDISDDGTIVIASVDETQAKEAQRRI) folds into the KH domain. Positions 627–695 (GQIYDGSVLR…DKGRLRLSIK (69 aa)) constitute an S1 motif domain.

The protein belongs to the polyribonucleotide nucleotidyltransferase family. Requires Mg(2+) as cofactor.

It is found in the cytoplasm. The catalysed reaction is RNA(n+1) + phosphate = RNA(n) + a ribonucleoside 5'-diphosphate. Functionally, involved in mRNA degradation. Catalyzes the phosphorolysis of single-stranded polyribonucleotides processively in the 3'- to 5'-direction. The chain is Polyribonucleotide nucleotidyltransferase from Bordetella parapertussis (strain 12822 / ATCC BAA-587 / NCTC 13253).